Reading from the N-terminus, the 633-residue chain is Bifunctional enzyme CysN/CysC (633 aa).

The interval 1 to 463 (MSHQSDLISE…REERAGRFGQ (463 aa)) is sulfate adenylyltransferase. A tr-type G domain is found at 22-241 (KELLRFLTCG…TVEIAADRNL (220 aa)). The interval 31–38 (GNVDDGKS) is G1. 31–38 (GNVDDGKS) provides a ligand contact to GTP. The interval 89-93 (GITID) is G2. A G3 region spans residues 110–113 (DTPG). GTP is bound by residues 110-114 (DTPGH) and 165-168 (NKMD). The tract at residues 165-168 (NKMD) is G4. Residues 204 to 206 (SAL) are G5. The tract at residues 464-633 (QPATVLFSGL…LDLLRERQAI (170 aa)) is adenylyl-sulfate kinase. 472–479 (GLSGAGKS) contacts ATP.

In the C-terminal section; belongs to the APS kinase family. This sequence in the N-terminal section; belongs to the TRAFAC class translation factor GTPase superfamily. Classic translation factor GTPase family. CysN/NodQ subfamily. Heterodimer composed of CysD, the smaller subunit, and CysNC.

It carries out the reaction sulfate + ATP + H(+) = adenosine 5'-phosphosulfate + diphosphate. The catalysed reaction is adenosine 5'-phosphosulfate + ATP = 3'-phosphoadenylyl sulfate + ADP + H(+). It participates in sulfur metabolism; hydrogen sulfide biosynthesis; sulfite from sulfate: step 1/3. It functions in the pathway sulfur metabolism; hydrogen sulfide biosynthesis; sulfite from sulfate: step 2/3. In terms of biological role, with CysD forms the ATP sulfurylase (ATPS) that catalyzes the adenylation of sulfate producing adenosine 5'-phosphosulfate (APS) and diphosphate, the first enzymatic step in sulfur assimilation pathway. APS synthesis involves the formation of a high-energy phosphoric-sulfuric acid anhydride bond driven by GTP hydrolysis by CysN coupled to ATP hydrolysis by CysD. APS kinase catalyzes the synthesis of activated sulfate. In Pseudomonas aeruginosa (strain ATCC 15692 / DSM 22644 / CIP 104116 / JCM 14847 / LMG 12228 / 1C / PRS 101 / PAO1), this protein is Bifunctional enzyme CysN/CysC (cysNC).